Reading from the N-terminus, the 963-residue chain is Bifunctional glutamine synthetase adenylyltransferase/adenylyl-removing enzyme (963 aa).

The adenylyl removase stretch occupies residues 1–453 (MLTTLIPLSQ…IFNEIIGEEE (453 aa)). The adenylyl transferase stretch occupies residues 461–963 (VNEKLAEWKD…VREMWQRLLA (503 aa)).

This sequence belongs to the GlnE family. Mg(2+) serves as cofactor.

The catalysed reaction is [glutamine synthetase]-O(4)-(5'-adenylyl)-L-tyrosine + phosphate = [glutamine synthetase]-L-tyrosine + ADP. It carries out the reaction [glutamine synthetase]-L-tyrosine + ATP = [glutamine synthetase]-O(4)-(5'-adenylyl)-L-tyrosine + diphosphate. Functionally, involved in the regulation of glutamine synthetase GlnA, a key enzyme in the process to assimilate ammonia. When cellular nitrogen levels are high, the C-terminal adenylyl transferase (AT) inactivates GlnA by covalent transfer of an adenylyl group from ATP to specific tyrosine residue of GlnA, thus reducing its activity. Conversely, when nitrogen levels are low, the N-terminal adenylyl removase (AR) activates GlnA by removing the adenylyl group by phosphorolysis, increasing its activity. The regulatory region of GlnE binds the signal transduction protein PII (GlnB) which indicates the nitrogen status of the cell. This is Bifunctional glutamine synthetase adenylyltransferase/adenylyl-removing enzyme from Mannheimia haemolytica (Pasteurella haemolytica).